A 216-amino-acid chain; its full sequence is Somatotropin (216 aa).

An N-terminal signal peptide occupies residues 1–26 (MAADPQSSVLLAFALLCLPWPQEVGA). His-45 is a binding site for Zn(2+). A disulfide bond links Cys-78 and Cys-189. Ser-131 carries the phosphoserine modification. Glu-198 serves as a coordination point for Zn(2+). Cys-206 and Cys-214 are oxidised to a cystine.

It belongs to the somatotropin/prolactin family.

The protein localises to the secreted. Plays an important role in growth control. Its major role in stimulating body growth is to stimulate the liver and other tissues to secrete IGF1. It stimulates both the differentiation and proliferation of myoblasts. It also stimulates amino acid uptake and protein synthesis in muscle and other tissues. The polypeptide is Somatotropin (GH1) (Ailuropoda melanoleuca (Giant panda)).